We begin with the raw amino-acid sequence, 260 residues long: Indole-3-glycerol phosphate synthase (260 aa).

This sequence belongs to the TrpC family.

It catalyses the reaction 1-(2-carboxyphenylamino)-1-deoxy-D-ribulose 5-phosphate + H(+) = (1S,2R)-1-C-(indol-3-yl)glycerol 3-phosphate + CO2 + H2O. The protein operates within amino-acid biosynthesis; L-tryptophan biosynthesis; L-tryptophan from chorismate: step 4/5. This Neisseria gonorrhoeae (strain NCCP11945) protein is Indole-3-glycerol phosphate synthase.